We begin with the raw amino-acid sequence, 69 residues long: Beta-defensin 11 (69 aa).

The signal sequence occupies residues 1–23 (MRTLCSLLLIGCLLFSYDTPVVG). Disulfide bonds link Cys-35-Cys-64, Cys-42-Cys-57, and Cys-47-Cys-65.

It belongs to the beta-defensin family.

The protein resides in the secreted. Its function is as follows. Has antibacterial activity. The chain is Beta-defensin 11 (Defb11) from Rattus norvegicus (Rat).